We begin with the raw amino-acid sequence, 409 residues long: Secreted LysM effector Blys2 (409 aa).

The N-terminal stretch at 1-20 (MTRFTTTLVAALAGANLAAA) is a signal peptide. A LysM 1 domain is found at 24-71 (YKWRAHAGDTCDSLSSDWSVQVSDFIKWNPSVGANCSNGVTAGQEYCV). Asn58 carries N-linked (GlcNAc...) asparagine glycosylation. The segment at 74–111 (NGAGSKPTTPPTGSPTTLTTAVTTASSTPTQPTDGAPS) is disordered. The segment covering 87-106 (SPTTLTTAVTTASSTPTQPT) has biased composition (low complexity). LysM domains follow at residues 129–176 (AWYK…YVCV), 206–253 (KWYK…FVCV), 283–330 (KFYK…YYCI), and 357–405 (KYYK…YICV).

Belongs to the secreted LysM effector family.

The protein resides in the secreted. The protein localises to the cell wall. Functionally, secreted effector that enables the plant pathogenic fungus to manipulate host defenses for successful infection. Required for the full virulence to infect insect hosts. In contrast to Blys5, Blys2 is not able to protect fungal hyphae against the hydrolytic activity of chitinase but plays an important role in evasion of insect immunities. Binds chitin. Coats and protects the cell walls of insect pathogens from host cell recognition. In Beauveria bassiana (strain ARSEF 2860) (White muscardine disease fungus), this protein is Secreted LysM effector Blys2.